The following is a 323-amino-acid chain: MNTEASQDKTVSMTTGERLRQAREQLGLSQQAVAERLCLKMSTVRDIEEDNLSADLASTFVRGYIRSYAKLVRLPEDELLPMLAKQAPLKVAKVAPMQSFSLGKRRKKRDGWLMSFTWLIVFVVVGLTGAWWWQNHKAQQEEIVTMADQSSAQLSQNNEGQSVPLTDSNADNSAPLADNGSTPVDTGVAPQQSQTPAVSGSATAQQPAVVSPSQTTLPETTPAAPTAPLPTADAGVTAPAVDPNALVMEFSADCWLQVSDANGKTLYSGSQKSGGKLSLAGTAPYKLTIGAPAAVQIQYQGKPVDLSRFVKSNRVARLTVAAQ.

Residues 1 to 111 (MNTEASQDKT…LGKRRKKRDG (111 aa)) lie on the Cytoplasmic side of the membrane. The HTH cro/C1-type domain maps to 19-71 (LRQAREQLGLSQQAVAERLCLKMSTVRDIEEDNLSADLASTFVRGYIRSYAKL). The segment at residues 30–49 (QQAVAERLCLKMSTVRDIEE) is a DNA-binding region (H-T-H motif). A helical; Signal-anchor for type II membrane protein transmembrane segment spans residues 112–132 (WLMSFTWLIVFVVVGLTGAWW). Over 133–323 (WQNHKAQQEE…RVARLTVAAQ (191 aa)) the chain is Periplasmic. Polar residues-rich tracts occupy residues 149 to 172 (QSSA…NADN) and 179 to 214 (NGST…SPSQ). Residues 149 to 236 (QSSAQLSQNN…APLPTADAGV (88 aa)) are disordered. Residues 215-234 (TTLPETTPAAPTAPLPTADA) show a composition bias toward low complexity.

Belongs to the RodZ family.

It localises to the cell inner membrane. In terms of biological role, cytoskeletal protein that is involved in cell-shape control through regulation of the length of the long axis. The polypeptide is Cytoskeleton protein RodZ (Serratia proteamaculans (strain 568)).